The primary structure comprises 793 residues: MSLSAAARELSESDFQDIGPAPKPPPVAYNQTKPLVNYMSQMDLGAKSGGKMRAVQRKKSGWVSYKDDGLLSFLWQKRYMVLNDNYLSLYKGDSGREDAVVQIPLTSIVSVSRNQLKQNCFEVVRSSDRSGAPAAGAGGDSSKKSVFIATKTELDLHTWLDSIFSKCPLLSGVSSPTNFTHKVHVGFDPETGSFVGMPFNWEKLLKHSRITGEDWNNNSAAVIQVLQFYQEYNNGTATPTAQAAAQAAGAPGRPPMLTLSSNSSQASMQQIASTPPYSGGEMIPQRKAPTPPKPVVTSGSAIPSAKGGPNVGVTTSPSVHHQNTQHGKQQSPTQSGPPKSLPPLHRDEEGPTAPLGNSVSSVATKESPTERLLNNLSETSLMQKQLPAKPVAPPSSVGPVAPPLRLQPQRVAPGRPAQPGPHAPDTRPGGPNAMKQQHGPPAAASGQLGPDSKKPEGAPGHPTAVAKKKKAGRPTMSNAEIMTRLAAVTFNTDPSPFFQMIEKAGQGASGSVYLAQRLKIPPYDENSGVSQHELNDNIGDKVAIKQMILSKQPRKELIVNEILVMKDSQHKNIVNFLEAYLKTEDDLWVVMEYMEGGSLTDVIENSIGSDASESPMTEPQIAYIVRETCQGLKFLHDKHIIHRDIKSDNVLLDTHGRVKITDFGFCAKLTDKRSKRATMVGTPYWMAPEVVKQREYDEKVDVWSLGIMTIEMLEGEPPYLNEEPLKALYLIATNGTPKLKHPELLSLEIKRFLSVCLCVDVRYRASTEELLHHSFFETSCEPEELANLLKWKK.

The interval Arg8–Val27 is disordered. Positions Gln56 to Pro168 constitute a PH domain. Residues Val173–Gly186 enclose the CRIB domain. 2 disordered regions span residues Ala243–Thr369 and Gln383–Met476. 3 stretches are compositionally biased toward polar residues: residues Thr258–Pro276, Gly312–Pro337, and Leu355–Thr369. Residues Phe498–Phe776 form the Protein kinase domain. Residues Ala504–Val512 and Lys545 each bind ATP. Asp644 acts as the Proton acceptor in catalysis.

The protein belongs to the protein kinase superfamily. STE Ser/Thr protein kinase family. STE20 subfamily.

It carries out the reaction L-seryl-[protein] + ATP = O-phospho-L-seryl-[protein] + ADP + H(+). The catalysed reaction is L-threonyl-[protein] + ATP = O-phospho-L-threonyl-[protein] + ADP + H(+). Functionally, required for hyphal maturation and for septation. This Eremothecium gossypii (strain ATCC 10895 / CBS 109.51 / FGSC 9923 / NRRL Y-1056) (Yeast) protein is Serine/threonine-protein kinase CLA4 (CLA4).